The sequence spans 336 residues: uncharacterized protein (336 aa).

2 residues coordinate NADP(+): K39 and Y166.

It belongs to the NAD(P)-dependent epimerase/dehydratase family. Dihydroflavonol-4-reductase subfamily.

It localises to the cytoplasm. The protein localises to the nucleus. This is an uncharacterized protein from Schizosaccharomyces pombe (strain 972 / ATCC 24843) (Fission yeast).